The primary structure comprises 148 residues: Large ribosomal subunit protein bL9 (148 aa).

The protein belongs to the bacterial ribosomal protein bL9 family.

Binds to the 23S rRNA. The protein is Large ribosomal subunit protein bL9 of Bacillus cytotoxicus (strain DSM 22905 / CIP 110041 / 391-98 / NVH 391-98).